Here is a 159-residue protein sequence, read N- to C-terminus: Phosphopantetheine adenylyltransferase (159 aa).

Thr9 provides a ligand contact to substrate. ATP is bound by residues 9–10 and His17; that span reads TF. Residues Lys41, Leu73, and Arg87 each contribute to the substrate site. ATP contacts are provided by residues 88–90, Glu98, and 123–129; these read GLR and YSFISST.

It belongs to the bacterial CoaD family. As to quaternary structure, homohexamer. It depends on Mg(2+) as a cofactor.

It localises to the cytoplasm. The catalysed reaction is (R)-4'-phosphopantetheine + ATP + H(+) = 3'-dephospho-CoA + diphosphate. Its pathway is cofactor biosynthesis; coenzyme A biosynthesis; CoA from (R)-pantothenate: step 4/5. Reversibly transfers an adenylyl group from ATP to 4'-phosphopantetheine, yielding dephospho-CoA (dPCoA) and pyrophosphate. The sequence is that of Phosphopantetheine adenylyltransferase from Pseudomonas putida (strain ATCC 700007 / DSM 6899 / JCM 31910 / BCRC 17059 / LMG 24140 / F1).